A 91-amino-acid polypeptide reads, in one-letter code: Large ribosomal subunit protein bL31B (91 aa).

It belongs to the bacterial ribosomal protein bL31 family. Type B subfamily. As to quaternary structure, part of the 50S ribosomal subunit.

In Neisseria meningitidis serogroup A / serotype 4A (strain DSM 15465 / Z2491), this protein is Large ribosomal subunit protein bL31B.